We begin with the raw amino-acid sequence, 173 residues long: MSAPRIGVLALQGDTREHLAALREAGAESMPVRRRGELEAVDGLVIPGGESTTMSHLLKDLDLLEPLRGLLADGLPAYGACAGMILLASEILDAGAGGREALPLRAIDMTVRRNAFGRQVDSFEGDIAFAGLDGPVRAVFIRAPWVERAGDGVEVLARAAGHVVAVAGIEPDA.

49–51 (GES) serves as a coordination point for L-glutamine. Cys81 (nucleophile) is an active-site residue. L-glutamine-binding positions include Arg113 and 141 to 142 (IR).

The protein belongs to the glutaminase PdxT/SNO family. In the presence of PdxS, forms a dodecamer of heterodimers. Only shows activity in the heterodimer.

The enzyme catalyses aldehydo-D-ribose 5-phosphate + D-glyceraldehyde 3-phosphate + L-glutamine = pyridoxal 5'-phosphate + L-glutamate + phosphate + 3 H2O + H(+). It catalyses the reaction L-glutamine + H2O = L-glutamate + NH4(+). It functions in the pathway cofactor biosynthesis; pyridoxal 5'-phosphate biosynthesis. Functionally, catalyzes the hydrolysis of glutamine to glutamate and ammonia as part of the biosynthesis of pyridoxal 5'-phosphate. The resulting ammonia molecule is channeled to the active site of PdxS. The chain is Pyridoxal 5'-phosphate synthase subunit PdxT from Mycolicibacterium paratuberculosis (strain ATCC BAA-968 / K-10) (Mycobacterium paratuberculosis).